The following is a 485-amino-acid chain: Benzaldehyde dehydrogenase YfmT (485 aa).

231-236 (GSTKVG) contributes to the NAD(+) binding site. Residues Glu253 and Cys287 contribute to the active site.

It belongs to the aldehyde dehydrogenase family.

It carries out the reaction benzaldehyde + NAD(+) + H2O = benzoate + NADH + 2 H(+). The enzyme catalyses vanillin + NAD(+) + H2O = vanillate + NADH + 2 H(+). In terms of biological role, a benzaldehyde dehydrogenase able to act on substrates with 3- and 4-hydroxy and methoxy substitutions; converts vanillin (4-hydroxy-3-methoxybenzaldehyde) to vanillic acid in vitro. The physiological substrate is unknown. This chain is Benzaldehyde dehydrogenase YfmT (yfmT), found in Bacillus subtilis (strain 168).